A 445-amino-acid polypeptide reads, in one-letter code: Putative ubiquitin carboxyl-terminal hydrolase L293 (445 aa).

The USP domain occupies K133–I441. Catalysis depends on C142, which acts as the Nucleophile. The active-site Proton acceptor is H384.

It belongs to the peptidase C19 family.

The protein resides in the virion. The enzyme catalyses Thiol-dependent hydrolysis of ester, thioester, amide, peptide and isopeptide bonds formed by the C-terminal Gly of ubiquitin (a 76-residue protein attached to proteins as an intracellular targeting signal).. The protein is Putative ubiquitin carboxyl-terminal hydrolase L293 of Acanthamoeba polyphaga mimivirus (APMV).